The primary structure comprises 199 residues: Photosystem I reaction center subunit XI (199 aa).

The next 2 membrane-spanning stretches (helical) occupy residues 108–128 (VTAG…LLVL) and 165–185 (FWLG…TLHL).

It belongs to the PsaL family.

The protein resides in the cellular thylakoid membrane. The sequence is that of Photosystem I reaction center subunit XI from Prochlorococcus marinus (strain MIT 9215).